Consider the following 216-residue polypeptide: MANRVDHEYDYLFKMVLIGDSGVGKSNILSRFTRNEFCLESKSTIGVEFATRTLQVEGKTVKAQIWDTAGQERYRAITSAYYRGAVGALLFYDITKRQTFDNVQRWLRELRDHRDSNIVIILAGNKSDLKHLRAVSEQDDQALVKKEGLSFLETSALEALNVDKAFQTILTDIYHIISKKALAAQEAAASTALPGQGTTINVSDNSANVKRGCCST.

GTP-binding positions include 19–27 (GDSGVGKSN), 38–44 (CLESKST), 67–71 (DTAGQ), 125–128 (NKSD), and 155–157 (SAL). The Effector region signature appears at 41-49 (SKSTIGVEF). S-geranylgeranyl cysteine attachment occurs at residues C213 and C214.

It belongs to the small GTPase superfamily. Rab family.

It is found in the cell membrane. In Nicotiana tabacum (Common tobacco), this protein is Ras-related protein Rab11A (RAB11A).